Consider the following 187-residue polypeptide: Elongation factor P (187 aa).

Belongs to the elongation factor P family.

It is found in the cytoplasm. Its pathway is protein biosynthesis; polypeptide chain elongation. In terms of biological role, involved in peptide bond synthesis. Stimulates efficient translation and peptide-bond synthesis on native or reconstituted 70S ribosomes in vitro. Probably functions indirectly by altering the affinity of the ribosome for aminoacyl-tRNA, thus increasing their reactivity as acceptors for peptidyl transferase. The protein is Elongation factor P of Helicobacter acinonychis (strain Sheeba).